We begin with the raw amino-acid sequence, 283 residues long: Putative sugar uptake protein BA_0200/GBAA_0200/BAS0200 (283 aa).

10 consecutive transmembrane segments (helical) span residues 4-21, 26-48, 52-71, 84-106, 110-132, 151-173, 178-195, 208-230, 234-253, and 260-279; these read LLAL…LVSV, GAYS…MYVF, ALTM…WALG, VSTT…GVIA, WTTT…GVVF, LLTL…WYNI, AILP…VLTS, ALSG…RVGV, FPLS…VFLG, and QLIF…VLLG.

The protein belongs to the GRP transporter (TC 2.A.7.5) family.

The protein resides in the cell membrane. The sequence is that of Putative sugar uptake protein BA_0200/GBAA_0200/BAS0200 from Bacillus anthracis.